The primary structure comprises 113 residues: Iron-sulfur cluster insertion protein ErpA (113 aa).

Iron-sulfur cluster contacts are provided by cysteine 41, cysteine 105, and cysteine 107.

The protein belongs to the HesB/IscA family. In terms of assembly, homodimer. Iron-sulfur cluster is required as a cofactor.

Its function is as follows. Required for insertion of 4Fe-4S clusters for at least IspG. The chain is Iron-sulfur cluster insertion protein ErpA from Colwellia psychrerythraea (strain 34H / ATCC BAA-681) (Vibrio psychroerythus).